Consider the following 352-residue polypeptide: Small ribosomal subunit biogenesis GTPase RsgA 1 (352 aa).

The segment at 1–24 (MAKKKKLTQGQVRRVRDNQQKRLK) is disordered. The CP-type G domain occupies 104–272 (TSVLTRPDYY…LIDSPGVREF (169 aa)). GTP contacts are provided by residues 160–163 (NKID) and 214–222 (GQSGVGKSS). Residues Cys296, Cys301, His303, and Cys309 each coordinate Zn(2+).

This sequence belongs to the TRAFAC class YlqF/YawG GTPase family. RsgA subfamily. Monomer. Associates with 30S ribosomal subunit, binds 16S rRNA. It depends on Zn(2+) as a cofactor.

The protein localises to the cytoplasm. Functionally, one of several proteins that assist in the late maturation steps of the functional core of the 30S ribosomal subunit. Helps release RbfA from mature subunits. May play a role in the assembly of ribosomal proteins into the subunit. Circularly permuted GTPase that catalyzes slow GTP hydrolysis, GTPase activity is stimulated by the 30S ribosomal subunit. This chain is Small ribosomal subunit biogenesis GTPase RsgA 1, found in Vibrio vulnificus (strain CMCP6).